Reading from the N-terminus, the 159-residue chain is 2-C-methyl-D-erythritol 2,4-cyclodiphosphate synthase (159 aa).

Residues aspartate 10 and histidine 12 each coordinate a divalent metal cation. Residues 10 to 12 (DVH) and 37 to 38 (HS) contribute to the 4-CDP-2-C-methyl-D-erythritol 2-phosphate site. An a divalent metal cation-binding site is contributed by histidine 45. 4-CDP-2-C-methyl-D-erythritol 2-phosphate contacts are provided by residues 59–61 (DIG), 64–68 (FLDTD), 103–109 (AQAPKML), 135–138 (TTTE), phenylalanine 142, and arginine 145.

This sequence belongs to the IspF family. In terms of assembly, homotrimer. Requires a divalent metal cation as cofactor.

The enzyme catalyses 4-CDP-2-C-methyl-D-erythritol 2-phosphate = 2-C-methyl-D-erythritol 2,4-cyclic diphosphate + CMP. The protein operates within isoprenoid biosynthesis; isopentenyl diphosphate biosynthesis via DXP pathway; isopentenyl diphosphate from 1-deoxy-D-xylulose 5-phosphate: step 4/6. In terms of biological role, involved in the biosynthesis of isopentenyl diphosphate (IPP) and dimethylallyl diphosphate (DMAPP), two major building blocks of isoprenoid compounds. Catalyzes the conversion of 4-diphosphocytidyl-2-C-methyl-D-erythritol 2-phosphate (CDP-ME2P) to 2-C-methyl-D-erythritol 2,4-cyclodiphosphate (ME-CPP) with a corresponding release of cytidine 5-monophosphate (CMP). The chain is 2-C-methyl-D-erythritol 2,4-cyclodiphosphate synthase from Francisella tularensis subsp. tularensis (strain FSC 198).